Consider the following 419-residue polypeptide: Mitogen-activated protein kinase pmk-2 (419 aa).

The Protein kinase domain maps to 49–350 (YNSLKPLGEG…VSSALRHDYL (302 aa)). ATP-binding positions include 55-63 (LGEGAYGVV) and lysine 78. Aspartate 210 functions as the Proton acceptor in the catalytic mechanism. At threonine 222 the chain carries Phosphothreonine. The TXY signature appears at 222–224 (TGY). Tyrosine 224 carries the post-translational modification Phosphotyrosine.

It belongs to the protein kinase superfamily. CMGC Ser/Thr protein kinase family. MAP kinase subfamily. Requires Mg(2+) as cofactor. In terms of processing, dually phosphorylated on Thr-222 and Tyr-224, which activates the enzyme.

It localises to the cytoplasm. The enzyme catalyses L-seryl-[protein] + ATP = O-phospho-L-seryl-[protein] + ADP + H(+). It catalyses the reaction L-threonyl-[protein] + ATP = O-phospho-L-threonyl-[protein] + ADP + H(+). Its activity is regulated as follows. Activated by phosphorylation on threonine and tyrosine. Inhibited by pyridinyl-imidazole related compounds. Functionally, responds to activation by environmental stress and pro-inflammatory cytokines by phosphorylating downstream targets. The chain is Mitogen-activated protein kinase pmk-2 (pmk-2) from Caenorhabditis elegans.